The following is a 254-amino-acid chain: Precorrin-3B C(17)-methyltransferase (254 aa).

It belongs to the precorrin methyltransferase family.

The enzyme catalyses precorrin-3B + S-adenosyl-L-methionine = precorrin-4 + S-adenosyl-L-homocysteine + 3 H(+). It participates in cofactor biosynthesis; adenosylcobalamin biosynthesis; cob(II)yrinate a,c-diamide from precorrin-2 (aerobic route): step 3/10. In terms of biological role, methyltransferase that catalyzes the methylation of C-17 in precorrin-3B to form precorrin-4. In Sinorhizobium sp, this protein is Precorrin-3B C(17)-methyltransferase (cobJ).